The sequence spans 148 residues: Gag-Pol polyprotein (148 aa).

The region spanning 1-64 (IPYNPQSQGV…SAGERIIDII (64 aa)) is the Integrase catalytic domain. Glu12 lines the Mg(2+) pocket. Residues 83-130 (FRVYYRDSRDPIWKGPAKLLWKGEGAVVIQDNSDIKVVPRRKVKIIRD) constitute a DNA-binding region (integrase-type).

As to quaternary structure, homotetramer; may further associate as a homohexadecamer. Part of the pre-integration complex (PIC) which is composed of viral genome, matrix protein, Vpr and integrase. Interacts with human SMARCB1/INI1 and human PSIP1/LEDGF isoform 1. Interacts with human KPNA3; this interaction might play a role in nuclear import of the pre-integration complex. Interacts with human NUP153; this interaction might play a role in nuclear import of the pre-integration complex. In terms of processing, specific enzymatic cleavages by the viral protease yield mature proteins.

In terms of biological role, catalyzes viral DNA integration into the host chromosome, by performing a series of DNA cutting and joining reactions. This enzyme activity takes place after virion entry into a cell and reverse transcription of the RNA genome in dsDNA. The first step in the integration process is 3' processing. This step requires a complex comprising the viral genome, matrix protein, Vpr and integrase. This complex is called the pre-integration complex (PIC). The integrase protein removes 2 nucleotides from each 3' end of the viral DNA, leaving recessed CA OH's at the 3' ends. In the second step, the PIC enters cell nucleus. This process is mediated through integrase and Vpr proteins, and allows the virus to infect a non dividing cell. This ability to enter the nucleus is specific of lentiviruses, other retroviruses cannot and rely on cell division to access cell chromosomes. In the third step, termed strand transfer, the integrase protein joins the previously processed 3' ends to the 5' ends of strands of target cellular DNA at the site of integration. The 5'-ends are produced by integrase-catalyzed staggered cuts, 5 bp apart. A Y-shaped, gapped, recombination intermediate results, with the 5'-ends of the viral DNA strands and the 3' ends of target DNA strands remaining unjoined, flanking a gap of 5 bp. The last step is viral DNA integration into host chromosome. This involves host DNA repair synthesis in which the 5 bp gaps between the unjoined strands are filled in and then ligated. Since this process occurs at both cuts flanking the HIV genome, a 5 bp duplication of host DNA is produced at the ends of HIV-1 integration. Alternatively, Integrase may catalyze the excision of viral DNA just after strand transfer, this is termed disintegration. In Homo sapiens (Human), this protein is Gag-Pol polyprotein (gag-pol).